Consider the following 134-residue polypeptide: Large ribosomal subunit protein bL20 (134 aa).

The protein belongs to the bacterial ribosomal protein bL20 family.

In terms of biological role, binds directly to 23S ribosomal RNA and is necessary for the in vitro assembly process of the 50S ribosomal subunit. It is not involved in the protein synthesizing functions of that subunit. The protein is Large ribosomal subunit protein bL20 of Rhizobium rhizogenes (strain K84 / ATCC BAA-868) (Agrobacterium radiobacter).